The chain runs to 714 residues: Interferon-induced GTP-binding protein Mx2 (714 aa).

The tract at residues 1–89 is disordered; it reads MSMSYRALKF…QRSKGSENNL (89 aa). 2 stretches are compositionally biased toward polar residues: residues 61-70 and 79-88; these read NNFNQLNLDP and QQRSKGSENN. One can recognise a Dynamin-type G domain in the interval 115 to 386; that stretch reads DLALPAIAVI…LIWHINKSLP (272 aa). Residues 125–132 form a G1 motif region; it reads GDQSSGKS. 125–132 is a binding site for GTP; the sequence is GDQSSGKS. The segment at 150–152 is G2 motif; sequence ITR. Positions 224–227 are G3 motif; the sequence is DLPG. GTP is bound by residues 224-228 and 293-296; these read DLPGI and TKPD. A G4 motif region spans residues 293–296; the sequence is TKPD. The G5 motif stretch occupies residues 325-328; the sequence is KCRG. Residues 622–713 form the GED domain; sequence IVEIGVHLNA…ALYEFPHFKS (92 aa).

The protein belongs to the TRAFAC class dynamin-like GTPase superfamily. Dynamin/Fzo/YdjA family.

It is found in the cytoplasm. Its subcellular location is the nucleus. In terms of biological role, interferon-induced dynamin-like GTPase with antiviral activity. The chain is Interferon-induced GTP-binding protein Mx2 (MX2) from Ovis aries (Sheep).